The chain runs to 1000 residues: Bifunctional glutamine synthetase adenylyltransferase/adenylyl-removing enzyme (1000 aa).

Residues 1–481 form an adenylyl removase region; the sequence is MTAPGRRSST…LHEKLFYRPL (481 aa). Positions 487–1000 are adenylyl transferase; the sequence is QLAPGEARLS…AVVDEQFYGA (514 aa).

It belongs to the GlnE family. Mg(2+) serves as cofactor.

It catalyses the reaction [glutamine synthetase]-O(4)-(5'-adenylyl)-L-tyrosine + phosphate = [glutamine synthetase]-L-tyrosine + ADP. The catalysed reaction is [glutamine synthetase]-L-tyrosine + ATP = [glutamine synthetase]-O(4)-(5'-adenylyl)-L-tyrosine + diphosphate. Its function is as follows. Involved in the regulation of glutamine synthetase GlnA, a key enzyme in the process to assimilate ammonia. When cellular nitrogen levels are high, the C-terminal adenylyl transferase (AT) inactivates GlnA by covalent transfer of an adenylyl group from ATP to specific tyrosine residue of GlnA, thus reducing its activity. Conversely, when nitrogen levels are low, the N-terminal adenylyl removase (AR) activates GlnA by removing the adenylyl group by phosphorolysis, increasing its activity. The regulatory region of GlnE binds the signal transduction protein PII (GlnB) which indicates the nitrogen status of the cell. This is Bifunctional glutamine synthetase adenylyltransferase/adenylyl-removing enzyme from Streptomyces avermitilis (strain ATCC 31267 / DSM 46492 / JCM 5070 / NBRC 14893 / NCIMB 12804 / NRRL 8165 / MA-4680).